Consider the following 404-residue polypeptide: Tryptophan synthase beta chain (404 aa).

Lys-94 is modified (N6-(pyridoxal phosphate)lysine).

Belongs to the TrpB family. In terms of assembly, tetramer of two alpha and two beta chains. Pyridoxal 5'-phosphate serves as cofactor.

The catalysed reaction is (1S,2R)-1-C-(indol-3-yl)glycerol 3-phosphate + L-serine = D-glyceraldehyde 3-phosphate + L-tryptophan + H2O. Its pathway is amino-acid biosynthesis; L-tryptophan biosynthesis; L-tryptophan from chorismate: step 5/5. Its function is as follows. The beta subunit is responsible for the synthesis of L-tryptophan from indole and L-serine. The protein is Tryptophan synthase beta chain of Staphylococcus saprophyticus subsp. saprophyticus (strain ATCC 15305 / DSM 20229 / NCIMB 8711 / NCTC 7292 / S-41).